Reading from the N-terminus, the 127-residue chain is Large ribosomal subunit protein bL12 (127 aa).

The protein belongs to the bacterial ribosomal protein bL12 family. In terms of assembly, homodimer. Part of the ribosomal stalk of the 50S ribosomal subunit. Forms a multimeric L10(L12)X complex, where L10 forms an elongated spine to which 2 to 4 L12 dimers bind in a sequential fashion. Binds GTP-bound translation factors.

In terms of biological role, forms part of the ribosomal stalk which helps the ribosome interact with GTP-bound translation factors. Is thus essential for accurate translation. The protein is Large ribosomal subunit protein bL12 of Symbiobacterium thermophilum (strain DSM 24528 / JCM 14929 / IAM 14863 / T).